Here is a 930-residue protein sequence, read N- to C-terminus: A disintegrin and metalloproteinase with thrombospondin motifs 5 (930 aa).

An N-terminal signal peptide occupies residues 1 to 21 (MRLEWAPLLLLLLLLSASCLS). Residues 22–261 (LAADSPAAAP…PQTWWRRRRR (240 aa)) constitute a propeptide that is removed on maturation. Positions 31-53 (PAQDKTRQPQAAAAAAEPDQPQG) are enriched in low complexity. Disordered regions lie at residues 31–68 (PAQDKTRQPQAAAAAAEPDQPQGEETRERGHLQPLAGQ) and 207–231 (ASCETPASPSGPQESPSVHSRSRRR). The short motif at 207–214 (ASCETPAS) is the Cysteine switch element. Position 209 (cysteine 209) interacts with Zn(2+). A compositionally biased stretch (polar residues) spans 211–225 (TPASPSGPQESPSVH). In terms of domain architecture, Peptidase M12B spans 267–476 (RQVELLLVAD…GHGNCLLDLP (210 aa)). Disulfide bonds link cysteine 342-cysteine 394, cysteine 371-cysteine 376, cysteine 388-cysteine 471, cysteine 426-cysteine 455, cysteine 497-cysteine 519, cysteine 508-cysteine 529, cysteine 514-cysteine 548, and cysteine 542-cysteine 553. Histidine 410 is a binding site for Zn(2+). Glutamate 411 is a catalytic residue. Zn(2+) contacts are provided by histidine 414 and histidine 420. The region spanning 485–566 (ELPGQTYDAT…TKKKYYSTSS (82 aa)) is the Disintegrin domain. Asparagine 498 carries an N-linked (GlcNAc...) asparagine glycan. Residues 567-622 (HGNWGSWGPWGQCSRSCGGGVQFAYRHCNNPAPRNSGRYCTGKRAIYRSCSVTPCP) enclose the TSP type-1 1 domain. Residues tryptophan 570 and tryptophan 573 are each glycosylated (C-linked (Man) tryptophan). Cystine bridges form between cysteine 579–cysteine 616, cysteine 583–cysteine 621, and cysteine 594–cysteine 606. O-linked (Fuc...) serine glycosylation is present at serine 582. N-linked (GlcNAc...) asparagine glycans are attached at residues asparagine 728, asparagine 802, and asparagine 807. The interval 732–874 (TKIIGTFNKK…HGSNKVGPHS (143 aa)) is spacer. The TSP type-1 2 domain maps to 875-929 (TQLQWVTGPWLACSRTCDTGWHTRTVQCQDGNRKLAKGCLLSQRPSAFKQCLLKK).

It depends on Zn(2+) as a cofactor. The precursor is cleaved by furin and PCSK7 outside of the cell. In terms of processing, glycosylated. Can be O-fucosylated by POFUT2 on a serine or a threonine residue found within the consensus sequence C1-X(2)-(S/T)-C2-G of the TSP type-1 repeat domains where C1 and C2 are the first and second cysteine residue of the repeat, respectively. Fucosylated repeats can then be further glycosylated by the addition of a beta-1,3-glucose residue by the glucosyltransferase, B3GALTL. Fucosylation mediates the efficient secretion of ADAMTS family members. Can also be C-glycosylated with one or two mannose molecules on tryptophan residues within the consensus sequence W-X-X-W of the TPRs, and N-glycosylated. These other glycosylations can also facilitate secretion. As to expression, expressed in skeletal muscle.

The protein localises to the secreted. Its subcellular location is the extracellular space. The protein resides in the extracellular matrix. In terms of biological role, metalloproteinase that plays an important role in connective tissue organization, development, inflammation and cell migration. Extracellular matrix (ECM) degrading enzyme that shows proteolytic activity toward the hyalectan group of chondroitin sulfate proteoglycans (CSPGs) including ACAN, VCAN, BCAN and NCAN. Cleavage within the hyalectans occurs at Glu-Xaa recognition motifs. Plays a role in embryonic development, including limb and cardiac morphogenesis, and skeletal muscle development through its VCAN remodeling properties. Cleaves VCAN in the pericellular matrix surrounding myoblasts, facilitating myoblast contact and fusion which is required for skeletal muscle development and regeneration. Participates in the development of brown adipose tissue and browning of white adipose tissue. Plays an important role for T-lymphocyte migration from draining lymph nodes following viral infection. This chain is A disintegrin and metalloproteinase with thrombospondin motifs 5 (Adamts5), found in Mus musculus (Mouse).